A 304-amino-acid polypeptide reads, in one-letter code: Acetylglutamate kinase (304 aa).

Substrate is bound by residues 77–78 (GG), Arg99, and Asn193.

This sequence belongs to the acetylglutamate kinase family. ArgB subfamily.

Its subcellular location is the cytoplasm. The catalysed reaction is N-acetyl-L-glutamate + ATP = N-acetyl-L-glutamyl 5-phosphate + ADP. The protein operates within amino-acid biosynthesis; L-arginine biosynthesis; N(2)-acetyl-L-ornithine from L-glutamate: step 2/4. Functionally, catalyzes the ATP-dependent phosphorylation of N-acetyl-L-glutamate. This chain is Acetylglutamate kinase, found in Chlorobium limicola (strain DSM 245 / NBRC 103803 / 6330).